Consider the following 94-residue polypeptide: Probable Fe(2+)-trafficking protein (94 aa).

The protein belongs to the Fe(2+)-trafficking protein family.

Functionally, could be a mediator in iron transactions between iron acquisition and iron-requiring processes, such as synthesis and/or repair of Fe-S clusters in biosynthetic enzymes. This is Probable Fe(2+)-trafficking protein from Alcanivorax borkumensis (strain ATCC 700651 / DSM 11573 / NCIMB 13689 / SK2).